The chain runs to 530 residues: Bifunctional purine biosynthesis protein PurH (530 aa).

Residues 1 to 148 (MEQARPIRRA…KNHKDVAIVV (148 aa)) enclose the MGS-like domain.

Belongs to the PurH family.

The enzyme catalyses (6R)-10-formyltetrahydrofolate + 5-amino-1-(5-phospho-beta-D-ribosyl)imidazole-4-carboxamide = 5-formamido-1-(5-phospho-D-ribosyl)imidazole-4-carboxamide + (6S)-5,6,7,8-tetrahydrofolate. It catalyses the reaction IMP + H2O = 5-formamido-1-(5-phospho-D-ribosyl)imidazole-4-carboxamide. The protein operates within purine metabolism; IMP biosynthesis via de novo pathway; 5-formamido-1-(5-phospho-D-ribosyl)imidazole-4-carboxamide from 5-amino-1-(5-phospho-D-ribosyl)imidazole-4-carboxamide (10-formyl THF route): step 1/1. Its pathway is purine metabolism; IMP biosynthesis via de novo pathway; IMP from 5-formamido-1-(5-phospho-D-ribosyl)imidazole-4-carboxamide: step 1/1. This chain is Bifunctional purine biosynthesis protein PurH, found in Aeromonas salmonicida (strain A449).